The following is a 234-amino-acid chain: Large ribosomal subunit protein uL1 (234 aa).

This sequence belongs to the universal ribosomal protein uL1 family. As to quaternary structure, part of the 50S ribosomal subunit.

Its function is as follows. Binds directly to 23S rRNA. The L1 stalk is quite mobile in the ribosome, and is involved in E site tRNA release. Protein L1 is also a translational repressor protein, it controls the translation of the L11 operon by binding to its mRNA. This chain is Large ribosomal subunit protein uL1, found in Escherichia coli (strain 55989 / EAEC).